The sequence spans 202 residues: MNSLAGLFITAVFVENLALTFFLGMCTFLAISKKIEVAFGMGIAVIVVQTLTVPINNLVYQYLLRDGALVWAGLAEIDLTFLGLVSYLGVIAAIVQILEMFLDRFMPALHSALGIYLPLIAVNCAILGGSLFMVERDYNFTESLVYGLGSGFGWALAIVALAGVRERLKYSDVPDGLQGLGITFISAGLMAMGFMAFSGIRL.

A run of 6 helical transmembrane segments spans residues 4 to 24, 35 to 55, 81 to 101, 114 to 134, 144 to 164, and 180 to 200; these read LAGL…FFLG, IEVA…TVPI, FLGL…LEMF, GIYL…LFMV, LVYG…LAGV, and LGIT…FSGI.

This sequence belongs to the NqrDE/RnfAE family. As to quaternary structure, composed of six subunits; NqrA, NqrB, NqrC, NqrD, NqrE and NqrF.

It is found in the cell inner membrane. The enzyme catalyses a ubiquinone + n Na(+)(in) + NADH + H(+) = a ubiquinol + n Na(+)(out) + NAD(+). In terms of biological role, NQR complex catalyzes the reduction of ubiquinone-1 to ubiquinol by two successive reactions, coupled with the transport of Na(+) ions from the cytoplasm to the periplasm. NqrA to NqrE are probably involved in the second step, the conversion of ubisemiquinone to ubiquinol. The sequence is that of Na(+)-translocating NADH-quinone reductase subunit E from Nitrosomonas europaea (strain ATCC 19718 / CIP 103999 / KCTC 2705 / NBRC 14298).